The sequence spans 218 residues: 2-C-methyl-D-erythritol 4-phosphate cytidylyltransferase (218 aa).

The protein belongs to the IspD/TarI cytidylyltransferase family. IspD subfamily.

It catalyses the reaction 2-C-methyl-D-erythritol 4-phosphate + CTP + H(+) = 4-CDP-2-C-methyl-D-erythritol + diphosphate. It participates in isoprenoid biosynthesis; isopentenyl diphosphate biosynthesis via DXP pathway; isopentenyl diphosphate from 1-deoxy-D-xylulose 5-phosphate: step 2/6. Functionally, catalyzes the formation of 4-diphosphocytidyl-2-C-methyl-D-erythritol from CTP and 2-C-methyl-D-erythritol 4-phosphate (MEP). This Chlamydia muridarum (strain MoPn / Nigg) protein is 2-C-methyl-D-erythritol 4-phosphate cytidylyltransferase.